We begin with the raw amino-acid sequence, 299 residues long: Aspartate carbamoyltransferase catalytic subunit (299 aa).

Residues arginine 54 and threonine 55 each coordinate carbamoyl phosphate. Lysine 83 contacts L-aspartate. Residues arginine 104, histidine 132, and glutamine 135 each contribute to the carbamoyl phosphate site. Arginine 165 and arginine 222 together coordinate L-aspartate. Residues leucine 261 and proline 262 each contribute to the carbamoyl phosphate site.

This sequence belongs to the aspartate/ornithine carbamoyltransferase superfamily. ATCase family. Heterooligomer of catalytic and regulatory chains.

The enzyme catalyses carbamoyl phosphate + L-aspartate = N-carbamoyl-L-aspartate + phosphate + H(+). It participates in pyrimidine metabolism; UMP biosynthesis via de novo pathway; (S)-dihydroorotate from bicarbonate: step 2/3. Functionally, catalyzes the condensation of carbamoyl phosphate and aspartate to form carbamoyl aspartate and inorganic phosphate, the committed step in the de novo pyrimidine nucleotide biosynthesis pathway. The polypeptide is Aspartate carbamoyltransferase catalytic subunit (Archaeoglobus fulgidus (strain ATCC 49558 / DSM 4304 / JCM 9628 / NBRC 100126 / VC-16)).